The chain runs to 441 residues: ATP-dependent RNA helicase sub2 (441 aa).

The span at 23-32 shows a compositional bias: low complexity; it reads TTAAPAANGD. Residues 23–42 are disordered; sequence TTAAPAANGDAAKKGDLTVS. A Q motif motif is present at residues 58-86; the sequence is TGFRDFLLKGELLRAITDCGFEHPSEVQQ. The 176-residue stretch at 89-264 folds into the Helicase ATP-binding domain; that stretch reads IPTAILNVDV…KKFMRNPLEV (176 aa). 102–109 is an ATP binding site; sequence AKSGLGKT. Residues 211–214 carry the DECD box motif; it reads DECD. The Helicase C-terminal domain occupies 292–437; the sequence is KLNELLDSLE…EYPEGGVDSS (146 aa).

It belongs to the DEAD box helicase family. DECD subfamily.

Its subcellular location is the nucleus. It catalyses the reaction ATP + H2O = ADP + phosphate + H(+). In terms of biological role, ATP-binding RNA helicase involved in transcription elongation and required for the export of mRNA out of the nucleus. SUB2 also plays a role in pre-mRNA splicing and spliceosome assembly. May be involved in rDNA and telomeric silencing, and maintenance of genome integrity. The protein is ATP-dependent RNA helicase sub2 (sub2) of Aspergillus oryzae (strain ATCC 42149 / RIB 40) (Yellow koji mold).